The primary structure comprises 493 residues: MILNSLSLCYHNKLILAPMVRVGTLPMRLLALDYGADIVYCEELIDLKMIQCKRVVNEVLSTVDFVAPDDRVVFRTCEREQNRVVFQMGTSDAERALAVARLVENDVAGIDVNMGCPKQYSTKGGMGAALLSDPDKIEKILSTLVKGTRRPVTCKIRILPSLEDTLSLVKRIERTGIAAIAVHGRKREERPQHPVSCEVIKAIADTLSIPVIANGGSHDHIQQYSDIEDFRQATAASSVMVARAAMWNPSIFLKEGLRPLEEVMQKYIRYAVQYDNHYTNTKYCLCQMLREQLESPQGRLLHAAQSSREICEAFGLGAFYEETTQELDAQQARLSAKTSEQTGEPAEDTSGVIKMAVKFDRRAYPAQITPKMCLLEWCRREKLAQPVYETVQRPLDRLFSSIVTVAEQKYQSTLWDKSKKLAEQAAAIVCLRSQGLPEGRLGEESPSLHKRKREAPDQDPGGPRAQELAQPGDLCKKPFVALGSGEESPLEGW.

The segment at 1–333 is catalytic domain; that stretch reads MILNSLSLCY…TQELDAQQAR (333 aa). Residues 18–20, glutamate 43, and glutamine 87 each bind FMN; that span reads PMV. Cysteine 116 (proton donor) is an active-site residue. FMN is bound by residues lysine 155, histidine 183, 214 to 216, and 242 to 243; these read NGG and AR. Residues 330 to 342 are compositionally biased toward polar residues; the sequence is QQARLSAKTSEQT. The tract at residues 330-349 is disordered; sequence QQARLSAKTSEQTGEPAEDT. Interaction with tRNA stretches follow at residues 367–371 and 420–424; these read QITPK and KLAEQ. Residues 369 to 436 form the DRBM domain; the sequence is TPKMCLLEWC…AIVCLRSQGL (68 aa). The interval 438–493 is disordered; it reads EGRLGEESPSLHKRKREAPDQDPGGPRAQELAQPGDLCKKPFVALGSGEESPLEGW. A phosphoserine mark is found at serine 445 and serine 488.

This sequence belongs to the Dus family. Dus2 subfamily. In terms of assembly, interacts with EPRS1. Interacts (via DRBM domain) with PRKRA and EIF2AK2/PKR (via DRBM 1 domain). The cofactor is FMN. Weak expression in heart, placenta and skeletal muscle. Up-regulated in most lung cancer cells (at protein level).

Its subcellular location is the cytoplasm. The protein localises to the endoplasmic reticulum. The catalysed reaction is 5,6-dihydrouridine(20) in tRNA + NADP(+) = uridine(20) in tRNA + NADPH + H(+). Its activity is regulated as follows. Inhibited by canertinib, PD 168393, AST-1306 and PF-6274484. Catalyzes the NADPH-dependent synthesis of dihydrouridine, a modified base found in the D-loop of most tRNAs. Specifically modifies U20 in cytoplasmic tRNAs. Activity depends on the presence of guanosine at position 19 in the tRNA substrate. Negatively regulates the activation of EIF2AK2/PKR. The chain is tRNA-dihydrouridine(20) synthase [NAD(P)+]-like (DUS2) from Homo sapiens (Human).